The primary structure comprises 122 residues: Large ribosomal subunit protein uL14 (122 aa).

It belongs to the universal ribosomal protein uL14 family. As to quaternary structure, part of the 50S ribosomal subunit. Forms a cluster with proteins L3 and L19. In the 70S ribosome, L14 and L19 interact and together make contacts with the 16S rRNA in bridges B5 and B8.

In terms of biological role, binds to 23S rRNA. Forms part of two intersubunit bridges in the 70S ribosome. This is Large ribosomal subunit protein uL14 from Cupriavidus metallidurans (strain ATCC 43123 / DSM 2839 / NBRC 102507 / CH34) (Ralstonia metallidurans).